A 347-amino-acid chain; its full sequence is Heme A synthase (347 aa).

The next 8 membrane-spanning stretches (helical) occupy residues valine 14–isoleucine 34, phenylalanine 96–methionine 116, phenylalanine 129–serine 149, leucine 162–leucine 182, valine 199–glycine 219, phenylalanine 260–leucine 280, methionine 287–tyrosine 307, and isoleucine 311–leucine 331. Histidine 262 serves as a coordination point for heme. Histidine 317 contacts heme.

Belongs to the COX15/CtaA family. Type 2 subfamily. Interacts with CtaB. Heme b is required as a cofactor.

It is found in the cell membrane. It carries out the reaction Fe(II)-heme o + 2 A + H2O = Fe(II)-heme a + 2 AH2. It participates in porphyrin-containing compound metabolism; heme A biosynthesis; heme A from heme O: step 1/1. Catalyzes the conversion of heme O to heme A by two successive hydroxylations of the methyl group at C8. The first hydroxylation forms heme I, the second hydroxylation results in an unstable dihydroxymethyl group, which spontaneously dehydrates, resulting in the formyl group of heme A. The chain is Heme A synthase from Ehrlichia ruminantium (strain Welgevonden).